A 174-amino-acid polypeptide reads, in one-letter code: Ferredoxin-2, mitochondrial (174 aa).

The transit peptide at 1–43 (MAASMARGVSARVLLRAAGGSWGPRAGHAAVTSRTFGTTGERR) directs the protein to the mitochondrion. A disordered region spans residues 26-52 (AGHAAVTSRTFGTTGERRAGEEAADSP). Residues 59–161 (VNVVFVDRSG…GVEFALPKIT (103 aa)) form the 2Fe-2S ferredoxin-type domain. Residues Cys96, Cys102, Cys105, and Cys142 each contribute to the [2Fe-2S] cluster site.

This sequence belongs to the adrenodoxin/putidaredoxin family. In terms of assembly, component of the mitochondrial core iron-sulfur cluster (ISC) complex composed of NFS1, LYRM4, NDUFAB1, ISCU, FXN, and FDX2; this complex is a heterohexamer containing two copies of each monomer. Form a heterodimer complex with NFS1. Interacts (in both their reduced and oxidized states) with the cysteine desulfurase (NFS1:LYRM4) complex; this interaction stimulates cysteine desulfurase activity, and serves as a reductant for Fe-S cluster assembly. Requires [2Fe-2S] cluster as cofactor.

Its subcellular location is the mitochondrion. It is found in the mitochondrion matrix. Electron donor, of the core iron-sulfur cluster (ISC) assembly complex, that acts to reduce the persulfide into sulfide during [2Fe-2S] clusters assembly on the scaffolding protein ISCU. The core iron-sulfur cluster (ISC) assembly complex is involved in the de novo synthesis of a [2Fe-2S] cluster, the first step of the mitochondrial iron-sulfur protein biogenesis. This process is initiated by the cysteine desulfurase complex (NFS1:LYRM4:NDUFAB1) that produces persulfide which is delivered on the scaffold protein ISCU in a FXN-dependent manner. Then this complex is stabilized by FDX2 which provides reducing equivalents to accomplish the [2Fe-2S] cluster assembly. Finally, the [2Fe-2S] cluster is transferred from ISCU to chaperone proteins, including HSCB, HSPA9 and GLRX5. Essential for coenzyme Q biosynthesis: together with FDXR, transfers the electrons required for the hydroxylation reaction performed by COQ6. This is Ferredoxin-2, mitochondrial from Mus musculus (Mouse).